We begin with the raw amino-acid sequence, 274 residues long: Ubiquinone biosynthesis O-methyltransferase, mitochondrial (274 aa).

Residues 1–30 (MNSMNILNKVKNVKSYTRLVRQGFLSQQRN) constitute a mitochondrion transit peptide. S-adenosyl-L-methionine contacts are provided by Arg-65, Gly-88, Asp-109, and Met-154. 3 residues coordinate Mg(2+): Glu-155, Glu-158, and His-159.

The protein belongs to the class I-like SAM-binding methyltransferase superfamily. UbiG/COQ3 family. As to quaternary structure, component of a multi-subunit COQ enzyme complex, composed of at least coq3, coq4, coq5, coq6, coq7 and coq9. Mg(2+) is required as a cofactor.

It localises to the mitochondrion inner membrane. It catalyses the reaction 3,4-dihydroxy-5-(all-trans-decaprenyl)benzoate + S-adenosyl-L-methionine = 4-hydroxy-3-methoxy-5-(all-trans-decaprenyl)benzoate + S-adenosyl-L-homocysteine + H(+). The enzyme catalyses a 3-demethylubiquinone + S-adenosyl-L-methionine = a ubiquinone + S-adenosyl-L-homocysteine. It carries out the reaction 3-demethylubiquinol-10 + S-adenosyl-L-methionine = ubiquinol-10 + S-adenosyl-L-homocysteine + H(+). The protein operates within cofactor biosynthesis; ubiquinone biosynthesis. In terms of biological role, O-methyltransferase required for two non-consecutive steps during ubiquinone biosynthesis. Catalyzes the 2 O-methylation of 3,4-dihydroxy-5-(all-trans-decaprenyl)benzoic acid into 4-hydroxy-3-methoxy-5-(all-trans-decaprenyl)benzoic acid. Also catalyzes the last step of ubiquinone biosynthesis by mediating methylation of 3-demethylubiquinone into ubiquinone. Also able to mediate the methylation of 3-demethylubiquinol-10 into ubiquinol-10. The protein is Ubiquinone biosynthesis O-methyltransferase, mitochondrial of Schizosaccharomyces pombe (strain 972 / ATCC 24843) (Fission yeast).